Here is a 1493-residue protein sequence, read N- to C-terminus: Protein Shroom4 (1493 aa).

The region spanning 10–92 (YVPVQLQGGA…ILKLIVRRRN (83 aa)) is the PDZ domain. The interval 202–282 (CALSLRPEEP…PPQPPVRRDS (81 aa)) is disordered. 2 stretches are compositionally biased toward polar residues: residues 234–243 (AETSGGSRRT) and 249–262 (TPSS…QEGY). S411 is subject to Phosphoserine. The segment at 430–695 (GSKGMELPPV…SPGQRPGQSS (266 aa)) is disordered. 2 stretches are compositionally biased toward basic and acidic residues: residues 470–484 (QSSK…DDRS) and 498–509 (GEADGHPSEKGF). Residues 513 to 547 (NRTSRAASELANQQPSASGSLVQQATDCSSTTKAA) are compositionally biased toward polar residues. S729 bears the Phosphoserine mark. Disordered stretches follow at residues 740–759 (AAME…ASTA) and 781–813 (SKSL…NFQP). Residues 782–802 (KSLSTSHLPGLTTHSNKTFTQ) show a composition bias toward polar residues. The residue at position 1019 (S1019) is a Phosphoserine. 4 disordered regions span residues 1117–1170 (AAQQ…ETSG), 1187–1206 (SFGH…AEQE), 1214–1236 (DFLP…PCYY), and 1246–1265 (GQEA…PPSG). Positions 1118–1129 (AQQQKQQQQQQK) are enriched in low complexity. A compositionally biased stretch (acidic residues) spans 1132–1159 (EEEEEEEEEEEEEEEEEEEEAEEEEEEL). The ASD2 domain occupies 1213 to 1492 (SDFLPPIRGH…RESLLLGPSN (280 aa)). The stretch at 1382 to 1488 (LSGRLARVEN…LKCLRESLLL (107 aa)) forms a coiled coil.

Belongs to the shroom family. Interacts directly with F-actin. In terms of tissue distribution, expressed in all fetal and adult tissues investigated. Expressed in adult heart, brain, placenta, lung, liver, skeletal muscle, kidney and pancreas. In brain regions detected in cerebellum, cerebral cortex, medulla, spinal cord, occipital pole, frontal lobe, temporal lobe and putamen. The expression is strongest in the medulla and weakest in the cerebral cortex.

The protein resides in the cytoplasm. Its subcellular location is the cytoskeleton. Functionally, probable regulator of cytoskeletal architecture that plays an important role in development. May regulate cellular and cytoskeletal architecture by modulating the spatial distribution of myosin II. The chain is Protein Shroom4 (SHROOM4) from Homo sapiens (Human).